Consider the following 205-residue polypeptide: Guanylate kinase (205 aa).

The Guanylate kinase-like domain occupies 3–183 (GFVLLISGPS…SYEALRAILI (181 aa)). 10–17 (GPSGAGKS) contributes to the ATP binding site.

It belongs to the guanylate kinase family.

Its subcellular location is the cytoplasm. The catalysed reaction is GMP + ATP = GDP + ADP. Its function is as follows. Essential for recycling GMP and indirectly, cGMP. This Campylobacter jejuni (strain RM1221) protein is Guanylate kinase.